The following is a 621-amino-acid chain: Bifunctional protein GlmU (621 aa).

The pyrophosphorylase stretch occupies residues 1–229 (MAERDLAVAI…AREIVGINDR (229 aa)). Residues 11-14 (LAAG), K25, Q76, and 81-82 (GT) contribute to the UDP-N-acetyl-alpha-D-glucosamine site. D106 is a binding site for Mg(2+). G143, E158, N173, and N227 together coordinate UDP-N-acetyl-alpha-D-glucosamine. N227 lines the Mg(2+) pocket. A linker region spans residues 230 to 250 (RQLAQAYQILQDRLKEAWMEA). An N-acetyltransferase region spans residues 251–621 (GVTFVDPDSV…TGVGIPSCPP (371 aa)). Positions 332 and 350 each coordinate UDP-N-acetyl-alpha-D-glucosamine. Catalysis depends on H362, which acts as the Proton acceptor. Residues Y365 and N376 each coordinate UDP-N-acetyl-alpha-D-glucosamine. Residues A379, 385–386 (NY), A422, and R441 each bind acetyl-CoA. The tract at residues 601–621 (ATPPSPQRADGTGVGIPSCPP) is disordered.

In the N-terminal section; belongs to the N-acetylglucosamine-1-phosphate uridyltransferase family. It in the C-terminal section; belongs to the transferase hexapeptide repeat family. Homotrimer. Mg(2+) is required as a cofactor.

The protein localises to the cytoplasm. The catalysed reaction is alpha-D-glucosamine 1-phosphate + acetyl-CoA = N-acetyl-alpha-D-glucosamine 1-phosphate + CoA + H(+). It catalyses the reaction N-acetyl-alpha-D-glucosamine 1-phosphate + UTP + H(+) = UDP-N-acetyl-alpha-D-glucosamine + diphosphate. Its pathway is nucleotide-sugar biosynthesis; UDP-N-acetyl-alpha-D-glucosamine biosynthesis; N-acetyl-alpha-D-glucosamine 1-phosphate from alpha-D-glucosamine 6-phosphate (route II): step 2/2. It participates in nucleotide-sugar biosynthesis; UDP-N-acetyl-alpha-D-glucosamine biosynthesis; UDP-N-acetyl-alpha-D-glucosamine from N-acetyl-alpha-D-glucosamine 1-phosphate: step 1/1. The protein operates within bacterial outer membrane biogenesis; LPS lipid A biosynthesis. Its function is as follows. Catalyzes the last two sequential reactions in the de novo biosynthetic pathway for UDP-N-acetylglucosamine (UDP-GlcNAc). The C-terminal domain catalyzes the transfer of acetyl group from acetyl coenzyme A to glucosamine-1-phosphate (GlcN-1-P) to produce N-acetylglucosamine-1-phosphate (GlcNAc-1-P), which is converted into UDP-GlcNAc by the transfer of uridine 5-monophosphate (from uridine 5-triphosphate), a reaction catalyzed by the N-terminal domain. This is Bifunctional protein GlmU from Synechococcus sp. (strain JA-3-3Ab) (Cyanobacteria bacterium Yellowstone A-Prime).